Consider the following 294-residue polypeptide: Nucleotide-binding protein CLD_1131 (294 aa).

8-15 (GLSGAGKT) is a binding site for ATP. 59-62 (DIRG) contacts GTP.

This sequence belongs to the RapZ-like family.

In terms of biological role, displays ATPase and GTPase activities. The chain is Nucleotide-binding protein CLD_1131 from Clostridium botulinum (strain Okra / Type B1).